An 89-amino-acid polypeptide reads, in one-letter code: Large ribosomal subunit protein uL24 (89 aa).

Belongs to the universal ribosomal protein uL24 family. As to quaternary structure, part of the 50S ribosomal subunit.

Functionally, one of two assembly initiator proteins, it binds directly to the 5'-end of the 23S rRNA, where it nucleates assembly of the 50S subunit. Its function is as follows. One of the proteins that surrounds the polypeptide exit tunnel on the outside of the subunit. This Oenococcus oeni (strain ATCC BAA-331 / PSU-1) protein is Large ribosomal subunit protein uL24.